The sequence spans 480 residues: Sialyltransferase-like protein 5 (480 aa).

Topologically, residues 1–17 are cytoplasmic; that stretch reads MARAPPPLSSLPPPPRR. The signal-anchor for type II membrane protein transmembrane segment at 18-38 threads the bilayer; it reads PTVVLLLGLALAFCLAVLSIQ. Topologically, residues 39–480 are lumenal; the sequence is SSFFTAPRLA…VCVRHERSSS (442 aa). N-linked (GlcNAc...) asparagine glycosylation is found at N98, N130, N165, and N321.

It belongs to the glycosyltransferase 29 family.

The protein localises to the golgi apparatus membrane. Functionally, may possess sialyltransferase-like activity in vitro. This chain is Sialyltransferase-like protein 5, found in Oryza sativa subsp. japonica (Rice).